Reading from the N-terminus, the 375-residue chain is Actin-related protein T1 (375 aa).

The protein belongs to the actin family.

The protein resides in the cytoplasm. The protein localises to the cytoskeleton. Its subcellular location is the nucleus. It localises to the cytoplasmic vesicle. It is found in the secretory vesicle. The protein resides in the acrosome. Its function is as follows. Negatively regulates the Hedgehog (SHH) signaling. Binds to the promoter of the SHH signaling mediator, GLI1, and inhibits its expression. The sequence is that of Actin-related protein T1 (ACTRT1) from Macaca fascicularis (Crab-eating macaque).